Consider the following 932-residue polypeptide: Protein hir1 (932 aa).

WD repeat units follow at residues 16–55, 72–111, 132–171, 174–213, 222–265, 268–316, and 320–361; these read GHRL…RENE, THTG…PGLG, GHDN…RLKR, AHQS…IEKT, PLST…SEIN, GHEG…PLLS, and VFQK…DMVS. Polar residues-rich tracts occupy residues 405–426 and 441–453; these read STTD…QKTP and TVDT…SKEQ. 2 disordered regions span residues 405 to 470 and 498 to 520; these read STTD…NEIP and TPST…LPPQ. Over residues 498 to 507 the composition is skewed to low complexity; that stretch reads TPSTSRLAST.

It belongs to the WD repeat HIR1 family. In terms of assembly, interacts with his3 and slm9.

Its subcellular location is the cytoplasm. The protein resides in the nucleus. In terms of biological role, probably required for replication-independent chromatin assembly. Required for transcriptional silencing in the outer repeat (otr) centromeric repeats and the Tf2 long terminal repeat retrotransposons. Repressor of histone gene transcription in G1 arrested cells. Required for repression of htb1 gene expression outside of S phase. This chain is Protein hir1 (hip1), found in Schizosaccharomyces pombe (strain 972 / ATCC 24843) (Fission yeast).